The primary structure comprises 286 residues: Translocon-associated protein subunit alpha (286 aa).

Positions 1–20 (MSSLRRLLLLLLLVFPATLL) are cleaved as a signal peptide. The Lumenal segment spans residues 21-207 (LRVGPGGSLA…EREDGLDGET (187 aa)). Acidic residues predominate over residues 37–75 (EDEETVEDSIIEDEDDEAEVEEDEPTDLAEDKEEDDVSG). Residues 37–83 (EDEETVEDSIIEDEDDEAEVEEDEPTDLAEDKEEDDVSGEPEASPSA) are disordered. Residues asparagine 136 and asparagine 191 are each glycosylated (N-linked (GlcNAc...) asparagine). Residues 208-228 (IFMYMFLAGLGLLVVVGLHQL) form a helical membrane-spanning segment. The Cytoplasmic portion of the chain corresponds to 229-286 (LESRKRKRPIQKVEMGTSSQNDVDMSWIPQETLNQINKASPRRLPRKRAQKRSVGSDE). Serine 247 bears the Phosphoserine mark. Threonine 260 bears the Phosphothreonine mark. The tract at residues 261 to 286 (LNQINKASPRRLPRKRAQKRSVGSDE) is disordered. At serine 268 the chain carries Phosphoserine. Positions 268-279 (SPRRLPRKRAQK) are enriched in basic residues.

The protein belongs to the TRAP-alpha family. Heterotetramer of TRAP-alpha, TRAP-beta, TRAP-delta and TRAP-gamma. Interacts with palmitoylated calnexin (CALX), the interaction is required for efficient folding of glycosylated proteins. In terms of processing, phosphorylated in its cytoplasmic tail.

It localises to the endoplasmic reticulum membrane. In terms of biological role, TRAP proteins are part of a complex whose function is to bind calcium to the ER membrane and thereby regulate the retention of ER resident proteins. May be involved in the recycling of the translocation apparatus after completion of the translocation process or may function as a membrane-bound chaperone facilitating folding of translocated proteins. This is Translocon-associated protein subunit alpha (SSR1) from Bos taurus (Bovine).